The chain runs to 400 residues: Argininosuccinate synthase (400 aa).

ATP is bound by residues 10-18 and Ala38; that span reads AYSGGVDTS. Tyr89 is a binding site for L-citrulline. Gly119 contributes to the ATP binding site. The L-aspartate site is built by Thr121, Asn125, and Asp126. Asn125 serves as a coordination point for L-citrulline. The L-citrulline site is built by Arg129, Ser177, Ser186, Glu262, and Tyr274.

The protein belongs to the argininosuccinate synthase family. Type 1 subfamily. As to quaternary structure, homotetramer.

It localises to the cytoplasm. The catalysed reaction is L-citrulline + L-aspartate + ATP = 2-(N(omega)-L-arginino)succinate + AMP + diphosphate + H(+). The protein operates within amino-acid biosynthesis; L-arginine biosynthesis; L-arginine from L-ornithine and carbamoyl phosphate: step 2/3. Activity decreases to 53.9% and 18.4% in the presence of 1 mM and 5 mM arginine, respectively. Activity also decreases to 80.1%, 78.1% and 92.1% in the presence of 5 mM ornithine, lysine and succinate, respectively. Activity does not decrease in the presence of glutamate, glutamine or asparagine. Catalyzes the condensation of citrulline and aspartate into argininosuccinate, the immediate precursor of arginine. SyArgG is the rate-limiting step in arginine biosynthesis in Synechocystis PCC 6803. The sequence is that of Argininosuccinate synthase from Synechocystis sp. (strain ATCC 27184 / PCC 6803 / Kazusa).